Consider the following 120-residue polypeptide: MARSMSLKLACVVVLCLLVDAPLAQGAISYDQVKSSLLPCVGYVRGNNARPAPPNYCKGIRSLKSAARIRLDRQAACKCIKSLAADISDINYGVAAGLPGQCNVHIPYKISPSIDCKRVK.

Positions 1-26 are cleaved as a signal peptide; that stretch reads MARSMSLKLACVVVLCLLVDAPLAQG. Disulfide bonds link C57–C102 and C77–C116.

It belongs to the plant LTP family. In terms of tissue distribution, specifically expressed in fiber cells.

In terms of biological role, plant non-specific lipid-transfer proteins transfer phospholipids as well as galactolipids across membranes. May play a role in wax or cutin deposition in the cell walls of expanding epidermal cells and certain secretory tissues. In Gossypium hirsutum (Upland cotton), this protein is Non-specific lipid-transfer protein 6 (LTP6).